The sequence spans 489 residues: NADH-quinone oxidoreductase subunit N (489 aa).

The next 14 helical transmembrane spans lie at 8–28, 35–55, 75–95, 105–125, 127–147, 159–179, 203–223, 235–255, 271–291, 303–323, 329–349, 374–394, 407–427, and 456–476; these read LIAM…MLSI, FTIA…LYYV, FFTA…YPWL, FYML…AHHL, SMFI…GYAF, YMLL…LLYA, VLAG…LFPF, PAPT…AVVM, MILG…ALTQ, VSHL…PILA, IYLA…AVAS, AVVM…LGFI, SLWW…FYYL, and LITL…QPLI.

It belongs to the complex I subunit 2 family. As to quaternary structure, NDH-1 is composed of 13 different subunits. Subunits NuoA, H, J, K, L, M, N constitute the membrane sector of the complex.

The protein localises to the cell inner membrane. The catalysed reaction is a quinone + NADH + 5 H(+)(in) = a quinol + NAD(+) + 4 H(+)(out). In terms of biological role, NDH-1 shuttles electrons from NADH, via FMN and iron-sulfur (Fe-S) centers, to quinones in the respiratory chain. The immediate electron acceptor for the enzyme in this species is believed to be ubiquinone. Couples the redox reaction to proton translocation (for every two electrons transferred, four hydrogen ions are translocated across the cytoplasmic membrane), and thus conserves the redox energy in a proton gradient. In Proteus mirabilis (strain HI4320), this protein is NADH-quinone oxidoreductase subunit N.